The primary structure comprises 429 residues: MADNDSISVRISEDCPPEIQRMLTAAWAHDVDTVKKLIDTPEVARGQDPKTGESPLHAAIRSCGAPSEDDTPEDHEKAKATVSELLMWGAIWNDVDNNNETPGCVAARLNRPELYELCVNAGVRAEMLFGLMDGYEALDSDDEDDEEMAEGEEAQAEDGEEAPELVAAEEATQTAEEETPAVFQPPAVNLEEQVTSDKYLRSTVAYSDGKLVDDAGNGVMMAWETDIMRRSVDALLPNKEPGKRILNIGFGMGIIDGMFAETKPAVHHIIEAHPEVLEYISTPESKFDSTWEESGPAPGAYRVWEGKWQQIGLQLLEEGHVYDAIYFDTFGEDYGQLRMFFTEYIPGLLDSNGIFGFFNGLGADRQICYDVYTKVAEMHLADAGLDVEWKEIPVDMKELAEADKDGWEGVKRRYWTLDTYRLPVCTFLG.

Disordered stretches follow at residues 41–76 (PEVA…EDHE) and 137–180 (ALDS…EETP). The segment covering 137-163 (ALDSDDEDDEEMAEGEEAQAEDGEEAP) has biased composition (acidic residues). The span at 164–174 (ELVAAEEATQT) shows a compositional bias: low complexity. Positions 190–429 (LEEQVTSDKY…YRLPVCTFLG (240 aa)) constitute an RMT2 domain. Residues Tyr-199, Met-228, 250–255 (FGMGII), 271–273 (EAH), 308–309 (WQ), and Asp-328 each bind S-adenosyl-L-methionine.

It belongs to the class I-like SAM-binding methyltransferase superfamily. RMT2 methyltransferase family. As to quaternary structure, monomer.

The protein resides in the cytoplasm. It localises to the nucleus. Functionally, S-adenosyl-L-methionine-dependent protein-arginine N-methyltransferase that methylates the delta-nitrogen atom of arginine residues to form N5-methylarginine (type IV) in target proteins. Monomethylates ribosomal protein L12. The sequence is that of Protein arginine N-methyltransferase 2 from Neurospora crassa (strain ATCC 24698 / 74-OR23-1A / CBS 708.71 / DSM 1257 / FGSC 987).